Here is a 261-residue protein sequence, read N- to C-terminus: Glucosamine-6-phosphate deaminase (261 aa).

Asp-67 (proton acceptor; for enolization step) is an active-site residue. Asp-136 acts as the For ring-opening step in catalysis. His-138 acts as the Proton acceptor; for ring-opening step in catalysis. The active-site For ring-opening step is the Glu-143.

Belongs to the glucosamine/galactosamine-6-phosphate isomerase family. NagB subfamily.

It catalyses the reaction alpha-D-glucosamine 6-phosphate + H2O = beta-D-fructose 6-phosphate + NH4(+). Its pathway is amino-sugar metabolism; N-acetylneuraminate degradation; D-fructose 6-phosphate from N-acetylneuraminate: step 5/5. Functionally, catalyzes the reversible isomerization-deamination of glucosamine 6-phosphate (GlcN6P) to form fructose 6-phosphate (Fru6P) and ammonium ion. The polypeptide is Glucosamine-6-phosphate deaminase (Mycolicibacterium smegmatis (strain ATCC 700084 / mc(2)155) (Mycobacterium smegmatis)).